The chain runs to 96 residues: MPANIRVEVAYALPEKQYLQRVTLDEGATVEQAIIASGLLALRDDIDLAKNKLGIYSRPVKLHDEVHDGDRVEIYRPLIADPKELRRQRAEKSAAK.

The protein belongs to the UPF0125 (RnfH) family.

The sequence is that of Protein RnfH from Klebsiella pneumoniae (strain 342).